A 483-amino-acid chain; its full sequence is Cobyric acid synthase (483 aa).

One can recognise a GATase cobBQ-type domain in the interval 251–438 (ALIVAVPMLP…LHGIFSADRF (188 aa)). Residue Cys-333 is the Nucleophile of the active site. His-430 is a catalytic residue.

The protein belongs to the CobB/CobQ family. CobQ subfamily.

The protein operates within cofactor biosynthesis; adenosylcobalamin biosynthesis. Catalyzes amidations at positions B, D, E, and G on adenosylcobyrinic A,C-diamide. NH(2) groups are provided by glutamine, and one molecule of ATP is hydrogenolyzed for each amidation. This is Cobyric acid synthase from Brucella abortus (strain S19).